The primary structure comprises 134 residues: Salivary protein 15 Iric-1 (134 aa).

A signal peptide spans Met1–Val21. An N-linked (GlcNAc...) asparagine glycan is attached at Asn22. The tract at residues Pro48–Asn67 is required for Borrelia OspC-binding. Asn91 and Asn103 each carry an N-linked (GlcNAc...) asparagine glycan. Residues Gly115–Cys134 form a CD4-binding region.

It belongs to the salp15 family. As to quaternary structure, monomer. Interacts with host CD4. Interacts with host DC-SIGN (CD209). In terms of assembly, (Microbial infection) Interacts with Borrelia outer surface protein C (OspC). In terms of tissue distribution, expressed in salivary glands. Detected in fed adult female.

It localises to the secreted. Its function is as follows. Salivary tick protein that downregulates host immune system by binding to both dendritic cells, and CD4(+) T cells. Specifically binds to the CD4 coreceptor on T cells. This interaction prevents the activation of the Src kinase, Lck, and its downstream substrate Zap-70, and results in deficient activation of PLCgamma1, the repression of calcium fluxes triggered by T-cell antigen receptor (TCR) ligation, and a subsequent reduction in interleukin-2 production. This salivary protein also binds to DC-SIGN (CD209) on dendritic cells (DC) and activates the Raf-1 kinase/MEK signaling pathway that results in down-regulating expression of pro-inflammatory cytokines. Furthermore, it inhibits T cell proliferation induced by DCs. In addition, it inhibits in vitro keratinocyte inflammation induced by Borrelia burgdorferi or by the major outer surface protein (OspC) of Borrelia. In addition, it downregulates chemokines and monocyte chemoattractant protein 1, as well as several antimicrobial peptides such as defensins, cathelicidin, psoriasin, and RNase 7. Apart from its immunomodulatory activities, it is also associated with protection of Borrelia spirochetes from antibody-mediated killing through its binding to OspC. In vivo, tests on different immune disease animal models show promising therapeutic results, e.g., in inhibiting HIV infection, experimental autoimmune encephalomyelitis, transplantation rejection, and asthma. (Microbial infection) Protects Borrelia garinii (strain VSBP) from host complement-mediated killing by binding to the surface of spirochetes and preventing deposition of host C5b-9 membrane attack complexes. Protects Borrelia garinii (strain A87S) from host complement-mediated killing. In terms of biological role, (Microbial infection) Partially protects Borrelia burgdorferi (strains VS215 and B31) from host complement-mediated killing. The protein is Salivary protein 15 Iric-1 of Ixodes ricinus (Common tick).